The sequence spans 347 residues: Heat-inducible transcription repressor HrcA (347 aa).

It belongs to the HrcA family.

Negative regulator of class I heat shock genes (grpE-dnaK-dnaJ and groELS operons). Prevents heat-shock induction of these operons. The chain is Heat-inducible transcription repressor HrcA from Lactiplantibacillus plantarum (strain ATCC BAA-793 / NCIMB 8826 / WCFS1) (Lactobacillus plantarum).